Here is an 803-residue protein sequence, read N- to C-terminus: Ras GTPase-activating protein 4B (803 aa).

C2 domains lie at 1 to 105 (MAKR…SGWA) and 116 to 232 (VQGE…EGWF). Ca(2+)-binding residues include aspartate 21, aspartate 27, aspartate 74, aspartate 76, serine 79, aspartate 82, aspartate 149, aspartate 155, aspartate 202, aspartate 204, serine 207, and aspartate 210. A Ras-GAP domain is found at 318–546 (GLAKDFLDLL…AQLKDFITKL (229 aa)). One can recognise a PH domain in the interval 566-673 (PPVKEGPLFI…WLSALRKVSI (108 aa)). The segment at 675 to 711 (NTGLLGSYHPGVFRGDKWSCCHQKEKTGQGCDKTRSR) adopts a Btk-type zinc-finger fold. Histidine 683, cysteine 694, cysteine 695, and cysteine 705 together coordinate Zn(2+). Positions 781–803 (EAHSSSPAGSPPSEPNCLLELQT) are disordered.

The cofactor is Ca(2+).

The protein resides in the cytoplasm. It is found in the cytosol. The protein localises to the cell membrane. Its function is as follows. Ca(2+)-dependent Ras GTPase-activating protein, that may play a role in the Ras-MAPK pathway. In Homo sapiens (Human), this protein is Ras GTPase-activating protein 4B (RASA4B).